The chain runs to 431 residues: Mannan endo-1,4-beta-mannosidase 7 (431 aa).

An N-terminal signal peptide occupies residues 1-25; it reads MKLLALFPFLAIVIQLSCWELGTDA. The substrate site is built by W87 and N202. The active-site Proton donor is the E203. Y280 is a binding site for substrate. E320 functions as the Nucleophile in the catalytic mechanism. W362 contributes to the substrate binding site.

It belongs to the glycosyl hydrolase 5 (cellulase A) family. Expressed in stems, flowers, siliques and seeds. Expressed in root vasculature, leaf hydathodes, anther filaments, stigma, sepal vasculature, at the base and apical parts of siliques, and replum. Expressed in the micropylar endosperm and radicle tip in early germinating seeds.

The protein resides in the secreted. It carries out the reaction Random hydrolysis of (1-&gt;4)-beta-D-mannosidic linkages in mannans, galactomannans and glucomannans.. Its function is as follows. Required for both, loosening of the micropylar endosperm, and rupture of the seed coat in germinating seeds. May participate in the hydrolysis of the mannans in the cell wall of germinating seeds. The sequence is that of Mannan endo-1,4-beta-mannosidase 7 (MAN7) from Arabidopsis thaliana (Mouse-ear cress).